We begin with the raw amino-acid sequence, 122 residues long: Large ribosomal subunit protein bL12 (122 aa).

Belongs to the bacterial ribosomal protein bL12 family. Homodimer. Part of the ribosomal stalk of the 50S ribosomal subunit. Forms a multimeric L10(L12)X complex, where L10 forms an elongated spine to which 2 to 4 L12 dimers bind in a sequential fashion. Binds GTP-bound translation factors.

Forms part of the ribosomal stalk which helps the ribosome interact with GTP-bound translation factors. Is thus essential for accurate translation. This chain is Large ribosomal subunit protein bL12, found in Mesoplasma florum (strain ATCC 33453 / NBRC 100688 / NCTC 11704 / L1) (Acholeplasma florum).